We begin with the raw amino-acid sequence, 474 residues long: ERO1-like protein alpha (474 aa).

The N-terminal stretch at 1 to 29 (MVSGCCRLDMSSYVSVLVLCSLLLWGSNS) is a signal peptide. 8 disulfide bridges follow: Cys-40–Cys-53, Cys-42–Cys-51, Cys-90–Cys-398, Cys-99–Cys-104, Cys-99–Cys-138, Cys-104–Cys-109, Cys-215–Cys-248, and Cys-401–Cys-404. 3 residues coordinate FAD: Arg-194, Thr-196, and Trp-207. FAD is bound by residues Ser-259, His-262, Arg-294, and Arg-307. N-linked (GlcNAc...) asparagine glycans are attached at residues Asn-340 and Asn-391. N-linked (GlcNAc...) asparagine glycosylation is present at Asn-430.

It belongs to the EROs family. In terms of assembly, predominantly monomer. May function both as a monomer and a homodimer. It depends on FAD as a cofactor. In terms of processing, the Cys-99/Cys-104 and Cys-401/Cys-404 disulfide bonds constitute the redox-active center. The Cys-99/Cys-104 disulfide bond may accept electron from protein disulfide isomerase (PDI) and funnel them to the active site disulfide Cys-401/Cys-404.

It is found in the endoplasmic reticulum membrane. Its activity is regulated as follows. Enzyme activity is tightly regulated to prevent the accumulation of reactive oxygen species in the endoplasmic reticulum. Reversibly down-regulated by the formation of disulfide bonds between the active site Cys-99 and Cys-138, and between Cys-104 and Cys-109. Glutathione may be required to regulate its activity in the endoplasmic reticulum. In terms of biological role, oxidoreductase involved in disulfide bond formation in the endoplasmic reticulum. Efficiently reoxidizes P4HB/PDI, the enzyme catalyzing protein disulfide formation, in order to allow P4HB to sustain additional rounds of disulfide formation. Following P4HB reoxidation, passes its electrons to molecular oxygen via FAD, leading to the production of reactive oxygen species (ROS) in the cell. Required for the folding of immunoglobulins. The protein is ERO1-like protein alpha of Xenopus tropicalis (Western clawed frog).